A 398-amino-acid chain; its full sequence is GTP cyclohydrolase-2 (398 aa).

The segment at 1 to 172 (MNTPTHTHPH…TAAAGASTTE (172 aa)) is unknown. The interval 173–398 (YELVTRTPVP…VKSIPKTGHA (226 aa)) is GTP cyclohydrolase II. A GTP-binding site is contributed by 220–224 (RVHSS). Zn(2+) contacts are provided by Cys225, Cys236, and Cys238. GTP is bound by residues Gln241, 263–265 (EGR), and Thr285. Asp297 (proton acceptor) is an active-site residue. Catalysis depends on Arg299, which acts as the Nucleophile. Positions 320 and 325 each coordinate GTP. The tract at residues 375–398 (QRPQDPSETVDGETVKSIPKTGHA) is disordered.

It in the C-terminal section; belongs to the GTP cyclohydrolase II family. Zn(2+) serves as cofactor.

It carries out the reaction GTP + 4 H2O = 2,5-diamino-6-hydroxy-4-(5-phosphoribosylamino)-pyrimidine + formate + 2 phosphate + 3 H(+). It participates in cofactor biosynthesis; riboflavin biosynthesis; 5-amino-6-(D-ribitylamino)uracil from GTP: step 1/4. Catalyzes the conversion of GTP to 2,5-diamino-6-ribosylamino-4(3H)-pyrimidinone 5'-phosphate (DARP), formate and pyrophosphate. This chain is GTP cyclohydrolase-2 (ribA), found in Xylella fastidiosa (strain 9a5c).